Here is a 135-residue protein sequence, read N- to C-terminus: MNLKQIAKDTAKTLQSYLTYQALRTVLAQLGETNPPLALWLHNFSAGKVQDGEKYIEELFLEKPDLALRIMTVREHIAEEIAEFLPEMVVTGIQQANMEKRRQHLERMTQVSLSHPSPESEQQQFSDPDWDNLAS.

Positions 103 to 135 (QHLERMTQVSLSHPSPESEQQQFSDPDWDNLAS) are disordered. The span at 109–126 (TQVSLSHPSPESEQQQFS) shows a compositional bias: polar residues.

The protein belongs to the RbcX family. In terms of assembly, homodimer. Interacts with the exposed C-terminal peptide of RbcL ('Glu-459-Asp-468'); binds 1 RbcL peptide per homodimer. Contacts a second RbcL monomer via its peripheral polar surface. A slightly longer RbcL peptide binds to RbcX2 with a higher affinity.

Its subcellular location is the carboxysome. It is found in the cytoplasm. An RbcL-specific chaperone. The central cleft of the RbcX homodimer (RbcX2) binds the C-terminus of an RbcL monomer, stabilizing the C-terminus and probably preventing its reassociation with chaperonin GroEL-ES. At the same time the peripheral region of RbcX2 binds a second RbcL monomer, bridging the RbcL homodimers in the correct orientation. The RbcX2(2)-bound RbcL dimers then assemble into the RbcL8 core (RbcL8-(RbcX2)8). RbcS binding triggers the release of RbcX2. Its function is as follows. Required for optimal reconstitution of RuBisCO upon expression of rbcL-rbcS subunits in E.coli. In Anabaena sp. (strain CA / ATCC 33047), this protein is RuBisCO chaperone RbcX.